The chain runs to 205 residues: Venom allergen 5 (205 aa).

Disulfide bonds link Cys-4-Cys-16, Cys-8-Cys-104, Cys-28-Cys-96, and Cys-171-Cys-188. An SCP domain is found at 47–190; that stretch reads VNEHNRFRQK…MQHHYLICNY (144 aa).

Belongs to the CRISP family. Venom allergen 5-like subfamily. As to expression, expressed by the venom gland.

The protein resides in the secreted. The sequence is that of Venom allergen 5 from Polistes fuscatus (Paper wasp).